The sequence spans 235 residues: Ribosome maturation factor RimM (235 aa).

The segment covering 1-19 has biased composition (basic and acidic residues); that stretch reads MKHEEANKEIGGRGAEGQR. The segment at 1–49 is disordered; sequence MKHEEANKEIGGRGAEGQRSKRVGGNSKIQNIQSPAPNPQPIVPNTQSP. Residues 150-230 form the PRC barrel domain; that stretch reads EDEYHVLDLI…RIEITPPPGL (81 aa).

Belongs to the RimM family. As to quaternary structure, binds ribosomal protein uS19.

The protein resides in the cytoplasm. Its function is as follows. An accessory protein needed during the final step in the assembly of 30S ribosomal subunit, possibly for assembly of the head region. Essential for efficient processing of 16S rRNA. May be needed both before and after RbfA during the maturation of 16S rRNA. It has affinity for free ribosomal 30S subunits but not for 70S ribosomes. The polypeptide is Ribosome maturation factor RimM (Nostoc punctiforme (strain ATCC 29133 / PCC 73102)).